The chain runs to 587 residues: Zinc finger protein 69 (587 aa).

The interval 42 to 128 is disordered; the sequence is NGTQQESLAD…TPGTTAAGSQ (87 aa). In terms of domain architecture, KRAB spans 76 to 147; the sequence is HDEATPGTPA…VDLSQEEWGQ (72 aa). C2H2-type zinc fingers lie at residues 271 to 293, 299 to 321, 327 to 349, 355 to 377, 383 to 405, 411 to 433, 439 to 461, 467 to 489, and 495 to 517; these read HKKK…ILEQ, KPAR…CMRA, NVCE…HTGE, KECG…HTGE, EECG…HTGE, DKCQ…HSGE, SECG…HTGE, TSCC…HTGE, and KECG…HTGV. Positions 564-587 are disordered; that stretch reads SRHQKIHRRNTFRDDPGHENKRQL. Basic and acidic residues predominate over residues 574–587; sequence TFRDDPGHENKRQL.

This sequence belongs to the krueppel C2H2-type zinc-finger protein family.

It is found in the nucleus. Putative transcription factor that appears to regulate lipid metabolism. The protein is Zinc finger protein 69 of Mus musculus (Mouse).